A 468-amino-acid polypeptide reads, in one-letter code: 3-isopropylmalate dehydratase large subunit (468 aa).

[4Fe-4S] cluster contacts are provided by Cys347, Cys407, and Cys410.

The protein belongs to the aconitase/IPM isomerase family. LeuC type 1 subfamily. In terms of assembly, heterodimer of LeuC and LeuD. Requires [4Fe-4S] cluster as cofactor.

It catalyses the reaction (2R,3S)-3-isopropylmalate = (2S)-2-isopropylmalate. It functions in the pathway amino-acid biosynthesis; L-leucine biosynthesis; L-leucine from 3-methyl-2-oxobutanoate: step 2/4. Catalyzes the isomerization between 2-isopropylmalate and 3-isopropylmalate, via the formation of 2-isopropylmaleate. This chain is 3-isopropylmalate dehydratase large subunit, found in Synechococcus elongatus (strain ATCC 33912 / PCC 7942 / FACHB-805) (Anacystis nidulans R2).